The primary structure comprises 984 residues: Ephrin type-B receptor 1 (984 aa).

A signal peptide spans 1 to 17; that stretch reads MALDYLLLLLLASAVAA. The Extracellular segment spans residues 18-540; sequence MEETLMDTRT…YKSELREQLP (523 aa). One can recognise an Eph LBD domain in the interval 19 to 201; it reads EETLMDTRTA…FFKKCPSIVQ (183 aa). 2 consecutive Fibronectin type-III domains span residues 322 to 432 and 433 to 528; these read VPSG…TNQA and APST…TLTD. 3 N-linked (GlcNAc...) asparagine glycosylation sites follow: asparagine 334, asparagine 426, and asparagine 480. Residues 541-563 traverse the membrane as a helical segment; the sequence is LIAGSAAAGVVFVVSLVAISIVC. Residues 564 to 984 are Cytoplasmic-facing; sequence SRKRAYSKEA…QISQSPTAMA (421 aa). The residue at position 600 (tyrosine 600) is a Phosphotyrosine. A Protein kinase domain is found at 619-882; the sequence is VKIEEVIGAG…EIVNTLDKMI (264 aa). ATP contacts are provided by residues 625-633 and lysine 651; that span reads IGAGEFGEV. Catalysis depends on aspartate 744, which acts as the Proton acceptor. Residues 911–975 form the SAM domain; that stretch reads TAFTTVDDWL…LNSIHSMRVQ (65 aa). A Phosphotyrosine; by autocatalysis modification is found at tyrosine 928. The PDZ-binding signature appears at 982–984; the sequence is AMA.

It belongs to the protein kinase superfamily. Tyr protein kinase family. Ephrin receptor subfamily. Heterotetramer upon binding of the ligand. The heterotetramer is composed of an ephrin dimer and a receptor dimer. Oligomerization is probably required to induce biological responses. Interacts with EPHB6; transphosphorylates EPHB6 to form an active signaling complex. Interacts with PICK1. Interacts (through Tyr-594) with NCK1 (via SH2 domain); activates the JUN cascade to regulate cell adhesion. The ligand-activated form interacts (through Tyr-928) with GRB7 and GRB10 (via SH2 domains). The ligand-activated form interacts (residues within the catalytic domain) with GRB2 (via SH2 domain). Interacts with GRB2, SHC1 and SRC; activates the MAPK/ERK cascade to regulate cell migration. Interacts with CBL; regulates receptor degradation through ubiquitination. Interacts with ACP1. Post-translationally, phosphorylated. Autophosphorylation is stimulated by the ligand EFNB1. Required for interaction with SH2 domain-containing interactors, for activation of the MAPK/ERK and JUN signaling cascades and for ubiquitination by CBL. Ubiquitinated; (EFNB1)ligand-induced poly- and/or multi-ubiquitination by CBL is regulated by SRC and leads to lysosomal degradation. In terms of tissue distribution, preferentially expressed in brain.

The protein resides in the cell membrane. The protein localises to the early endosome membrane. Its subcellular location is the cell projection. It localises to the dendrite. It carries out the reaction L-tyrosyl-[protein] + ATP = O-phospho-L-tyrosyl-[protein] + ADP + H(+). Functionally, receptor tyrosine kinase which binds promiscuously transmembrane ephrin-B family ligands residing on adjacent cells, leading to contact-dependent bidirectional signaling into neighboring cells. The signaling pathway downstream of the receptor is referred to as forward signaling while the signaling pathway downstream of the ephrin ligand is referred to as reverse signaling. Cognate/functional ephrin ligands for this receptor include EFNB1, EFNB2 and EFNB3. During nervous system development, regulates retinal axon guidance redirecting ipsilaterally ventrotemporal retinal ganglion cells axons at the optic chiasm midline. This probably requires repulsive interaction with EFNB2. In the adult nervous system together with EFNB3, regulates chemotaxis, proliferation and polarity of the hippocampus neural progenitors. In addition to its role in axon guidance also plays an important redundant role with other ephrin-B receptors in development and maturation of dendritic spines and synapse formation. May also regulate angiogenesis. More generally, may play a role in targeted cell migration and adhesion. Upon activation by EFNB1 and probably other ephrin-B ligands activates the MAPK/ERK and the JNK signaling cascades to regulate cell migration and adhesion respectively. Involved in the maintenance of the pool of satellite cells (muscle stem cells) by promoting their self-renewal and reducing their activation and differentiation. The polypeptide is Ephrin type-B receptor 1 (EPHB1) (Homo sapiens (Human)).